We begin with the raw amino-acid sequence, 499 residues long: Type-1 glutamine synthetase 1 (499 aa).

The 97-residue stretch at 50–146 (PQLKFIRVCW…IFGEFFYLDN (97 aa)) folds into the GS beta-grasp domain. Residues 158-499 (PRNSLQRAID…DQILKLLELF (342 aa)) enclose the GS catalytic domain.

The protein belongs to the glutamine synthetase family.

It catalyses the reaction L-glutamate + NH4(+) + ATP = L-glutamine + ADP + phosphate + H(+). In Dictyostelium discoideum (Social amoeba), this protein is Type-1 glutamine synthetase 1 (glnA1).